Here is a 455-residue protein sequence, read N- to C-terminus: Argininosuccinate lyase (455 aa).

Belongs to the lyase 1 family. Argininosuccinate lyase subfamily.

The protein resides in the cytoplasm. The catalysed reaction is 2-(N(omega)-L-arginino)succinate = fumarate + L-arginine. The protein operates within amino-acid biosynthesis; L-arginine biosynthesis; L-arginine from L-ornithine and carbamoyl phosphate: step 3/3. In Shewanella baltica (strain OS223), this protein is Argininosuccinate lyase.